The primary structure comprises 122 residues: Large ribosomal subunit protein uL18 (122 aa).

The protein belongs to the universal ribosomal protein uL18 family. Part of the 50S ribosomal subunit; part of the 5S rRNA/L5/L18/L25 subcomplex. Contacts the 5S and 23S rRNAs.

In terms of biological role, this is one of the proteins that bind and probably mediate the attachment of the 5S RNA into the large ribosomal subunit, where it forms part of the central protuberance. This chain is Large ribosomal subunit protein uL18, found in Petrotoga mobilis (strain DSM 10674 / SJ95).